Here is an 867-residue protein sequence, read N- to C-terminus: Retinoblastoma-related protein 1 (867 aa).

The tract at residues T275–L476 is domain A. Positions T275–P722 are pocket; binds RPD3I and RBAP1. The segment at I477–D594 is spacer. The segment at E512–S563 is disordered. Residues A530–N540 are compositionally biased toward basic and acidic residues. Positions E541–Q552 are enriched in polar residues. Residues V595–P722 are domain B. 2 disordered regions span residues P734–K762 and Q843–T867.

Belongs to the retinoblastoma protein (RB) family. In terms of assembly, interacts with RPD3I, RBAP1, the Arabidopsis cyclin CYCD3-1, the mastrevirus replication-associated protein A (RepA) and the begomovirus replication-associated protein (Rep). As to expression, ubiquitous.

It is found in the nucleus. Functionally, regulator of biological processes that recruits a histone deacetylase to control gene transcription. May play a role in the entry into mitosis, negatively regulating the cell proliferation. Formation of stable complexes with geminiviridae replication-associated proteins may create a cellular environment which favors viral DNA replication. This is Retinoblastoma-related protein 1 (RBR1) from Zea mays (Maize).